A 350-amino-acid polypeptide reads, in one-letter code: DNA polymerase IV (350 aa).

A UmuC domain is found at 6–187 (IIHIDMDAFY…LPVEKIFGIG (182 aa)). Mg(2+) contacts are provided by D10 and D105. E106 is a catalytic residue.

Belongs to the DNA polymerase type-Y family. In terms of assembly, monomer. It depends on Mg(2+) as a cofactor.

The protein localises to the cytoplasm. The enzyme catalyses DNA(n) + a 2'-deoxyribonucleoside 5'-triphosphate = DNA(n+1) + diphosphate. In terms of biological role, poorly processive, error-prone DNA polymerase involved in untargeted mutagenesis. Copies undamaged DNA at stalled replication forks, which arise in vivo from mismatched or misaligned primer ends. These misaligned primers can be extended by PolIV. Exhibits no 3'-5' exonuclease (proofreading) activity. May be involved in translesional synthesis, in conjunction with the beta clamp from PolIII. This Protochlamydia amoebophila (strain UWE25) protein is DNA polymerase IV.